The following is a 466-amino-acid chain: 3-isopropylmalate dehydratase large subunit (466 aa).

Positions 347, 407, and 410 each coordinate [4Fe-4S] cluster.

It belongs to the aconitase/IPM isomerase family. LeuC type 1 subfamily. In terms of assembly, heterodimer of LeuC and LeuD. It depends on [4Fe-4S] cluster as a cofactor.

The catalysed reaction is (2R,3S)-3-isopropylmalate = (2S)-2-isopropylmalate. It functions in the pathway amino-acid biosynthesis; L-leucine biosynthesis; L-leucine from 3-methyl-2-oxobutanoate: step 2/4. Its function is as follows. Catalyzes the isomerization between 2-isopropylmalate and 3-isopropylmalate, via the formation of 2-isopropylmaleate. In Shigella dysenteriae serotype 1 (strain Sd197), this protein is 3-isopropylmalate dehydratase large subunit.